The sequence spans 430 residues: Phosphomethylpyrimidine synthase (430 aa).

Substrate-binding positions include N67, M96, Y125, H161, 183–185, 224–227, and E263; these read SRG and DALR. H267 serves as a coordination point for Zn(2+). Substrate is bound at residue Y290. H331 contacts Zn(2+). Residues C406, C409, and C413 each coordinate [4Fe-4S] cluster.

Belongs to the ThiC family. Homodimer. The cofactor is [4Fe-4S] cluster.

It carries out the reaction 5-amino-1-(5-phospho-beta-D-ribosyl)imidazole + S-adenosyl-L-methionine = 4-amino-2-methyl-5-(phosphooxymethyl)pyrimidine + CO + 5'-deoxyadenosine + formate + L-methionine + 3 H(+). It participates in cofactor biosynthesis; thiamine diphosphate biosynthesis. Its function is as follows. Catalyzes the synthesis of the hydroxymethylpyrimidine phosphate (HMP-P) moiety of thiamine from aminoimidazole ribotide (AIR) in a radical S-adenosyl-L-methionine (SAM)-dependent reaction. In Campylobacter jejuni subsp. jejuni serotype O:23/36 (strain 81-176), this protein is Phosphomethylpyrimidine synthase.